A 409-amino-acid chain; its full sequence is Putative actin-fragmin kinase DDB_G0268812 (409 aa).

The tract at residues 1 to 45 (MKTFRDFKKKIKNNNNNKNNKNNNINNNNSNNNKNNKNNNNNNSN) is disordered. Residues 5 to 46 (RDFKKKIKNNNNNKNNKNNNINNNNSNNNKNNKNNNNNNSNN) adopt a coiled-coil conformation. Residues 13–45 (NNNNNKNNKNNNINNNNSNNNKNNKNNNNNNSN) are compositionally biased toward low complexity.

This sequence belongs to the protein kinase superfamily. AFK Ser/Thr protein kinase family.

This chain is Putative actin-fragmin kinase DDB_G0268812, found in Dictyostelium discoideum (Social amoeba).